Reading from the N-terminus, the 293-residue chain is Pyridoxal 5'-phosphate synthase subunit PdxS (293 aa).

D23 contacts D-ribose 5-phosphate. The Schiff-base intermediate with D-ribose 5-phosphate role is filled by K80. G152 contributes to the D-ribose 5-phosphate binding site. R164 provides a ligand contact to D-glyceraldehyde 3-phosphate. Residues G213 and 234-235 (GS) contribute to the D-ribose 5-phosphate site.

It belongs to the PdxS/SNZ family. As to quaternary structure, in the presence of PdxT, forms a dodecamer of heterodimers.

It carries out the reaction aldehydo-D-ribose 5-phosphate + D-glyceraldehyde 3-phosphate + L-glutamine = pyridoxal 5'-phosphate + L-glutamate + phosphate + 3 H2O + H(+). The protein operates within cofactor biosynthesis; pyridoxal 5'-phosphate biosynthesis. Functionally, catalyzes the formation of pyridoxal 5'-phosphate from ribose 5-phosphate (RBP), glyceraldehyde 3-phosphate (G3P) and ammonia. The ammonia is provided by the PdxT subunit. Can also use ribulose 5-phosphate and dihydroxyacetone phosphate as substrates, resulting from enzyme-catalyzed isomerization of RBP and G3P, respectively. This chain is Pyridoxal 5'-phosphate synthase subunit PdxS, found in Dehalococcoides mccartyi (strain ATCC BAA-2266 / KCTC 15142 / 195) (Dehalococcoides ethenogenes (strain 195)).